Here is a 606-residue protein sequence, read N- to C-terminus: Threonine--tRNA ligase (606 aa).

A catalytic region spans residues 212-503; sequence DHRKLGVEMK…LIEHTAGELP (292 aa). Zn(2+) is bound by residues Cys304, His355, and His480.

It belongs to the class-II aminoacyl-tRNA synthetase family. In terms of assembly, homodimer. Zn(2+) serves as cofactor.

It localises to the cytoplasm. It carries out the reaction tRNA(Thr) + L-threonine + ATP = L-threonyl-tRNA(Thr) + AMP + diphosphate + H(+). Catalyzes the attachment of threonine to tRNA(Thr) in a two-step reaction: L-threonine is first activated by ATP to form Thr-AMP and then transferred to the acceptor end of tRNA(Thr). Also edits incorrectly charged L-seryl-tRNA(Thr). This Campylobacter curvus (strain 525.92) protein is Threonine--tRNA ligase.